The chain runs to 196 residues: Ribonuclease HII (196 aa).

Positions 15–196 constitute an RNase H type-2 domain; the sequence is YIVAGIDEAG…RKSFRYSCFI (182 aa). A divalent metal cation contacts are provided by D21, E22, and D112.

The protein belongs to the RNase HII family. Requires Mn(2+) as cofactor. It depends on Mg(2+) as a cofactor.

The protein localises to the cytoplasm. The enzyme catalyses Endonucleolytic cleavage to 5'-phosphomonoester.. Functionally, endonuclease that specifically degrades the RNA of RNA-DNA hybrids. In Rickettsia canadensis (strain McKiel), this protein is Ribonuclease HII.